The primary structure comprises 399 residues: Probable peptidoglycan glycosyltransferase FtsW (399 aa).

Helical transmembrane passes span 33–53 (LVWLTLGLFSVGLIMVISTSI), 71–91 (IFYFFLIFLLSFIFLRTPIIF), 98–118 (IILIISIVLLVLVLLIGHSIH), 160–180 (FWGFFKPMSVIITQSMLLLAE), 182–202 (DLGTVVVLFFTTISVLFLSGA), 204–224 (IGQFFIIITVSILTIILLILL), 287–307 (IIGEELGYIGSFLILLIIFTI), 324–344 (IFSGFLACSIGIWLSFQTSIN), and 359–379 (LPFISYGGSSLIINSIAIFFL).

It belongs to the SEDS family. FtsW subfamily.

The protein resides in the cell inner membrane. The enzyme catalyses [GlcNAc-(1-&gt;4)-Mur2Ac(oyl-L-Ala-gamma-D-Glu-L-Lys-D-Ala-D-Ala)](n)-di-trans,octa-cis-undecaprenyl diphosphate + beta-D-GlcNAc-(1-&gt;4)-Mur2Ac(oyl-L-Ala-gamma-D-Glu-L-Lys-D-Ala-D-Ala)-di-trans,octa-cis-undecaprenyl diphosphate = [GlcNAc-(1-&gt;4)-Mur2Ac(oyl-L-Ala-gamma-D-Glu-L-Lys-D-Ala-D-Ala)](n+1)-di-trans,octa-cis-undecaprenyl diphosphate + di-trans,octa-cis-undecaprenyl diphosphate + H(+). Its pathway is cell wall biogenesis; peptidoglycan biosynthesis. Functionally, peptidoglycan polymerase that is essential for cell division. The chain is Probable peptidoglycan glycosyltransferase FtsW from Buchnera aphidicola subsp. Acyrthosiphon pisum (strain APS) (Acyrthosiphon pisum symbiotic bacterium).